The primary structure comprises 170 residues: Small ribosomal subunit protein uS4 (170 aa).

The S4 RNA-binding domain maps to 100-164; sequence RRLQTVVYRE…SDLTDELHPA (65 aa).

This sequence belongs to the universal ribosomal protein uS4 family. As to quaternary structure, part of the 30S ribosomal subunit. Contacts protein S5. The interaction surface between S4 and S5 is involved in control of translational fidelity.

In terms of biological role, one of the primary rRNA binding proteins, it binds directly to 16S rRNA where it nucleates assembly of the body of the 30S subunit. Functionally, with S5 and S12 plays an important role in translational accuracy. The chain is Small ribosomal subunit protein uS4 from Halobacterium salinarum (strain ATCC 29341 / DSM 671 / R1).